We begin with the raw amino-acid sequence, 813 residues long: Calpain-7 (813 aa).

The residue at position 1 (M1) is an N-acetylmethionine. Residue T95 is modified to Phosphothreonine. The Calpain catalytic domain occupies 232 to 540; that stretch reads RERFAYPMPF…YDVIYLSWNP (309 aa). Catalysis depends on residues C290, H458, and N478. The segment at 541 to 701 is domain III; that stretch reads GLFKESTCIH…INGKWSGQSA (161 aa). The interval 702 to 813 is domain N; it reads GGCGNFQETH…IIPIKITQLQ (112 aa).

This sequence belongs to the peptidase C2 family. Ubiquitous.

The protein resides in the nucleus. In terms of biological role, calcium-regulated non-lysosomal thiol-protease. This is Calpain-7 (CAPN7) from Homo sapiens (Human).